We begin with the raw amino-acid sequence, 290 residues long: TP53-target gene 5 protein (290 aa).

Basic residues predominate over residues 1–13 (MSPSAKKRPKNSR). Disordered regions lie at residues 1 to 29 (MSPS…TEQP) and 114 to 178 (KLES…RQPL). 3 stretches are compositionally biased toward basic and acidic residues: residues 16–26 (KMQDEKLRDET), 114–130 (KLES…KEWK), and 138–167 (RNKE…RDDS).

In terms of assembly, interacts with p53/TP53. As to expression, highly expressed in heart, brain and small intestine. Less abundant in skeletal muscle, spleen, prostate, ovary and colon. A smaller transcript is expressed specifically in the testis.

Its subcellular location is the cytoplasm. It localises to the nucleus. Functionally, may play a significant role in p53/TP53-mediating signaling pathway. In Homo sapiens (Human), this protein is TP53-target gene 5 protein (TP53TG5).